The primary structure comprises 600 residues: Long-chain-fatty-acid--CoA ligase FadD15 (600 aa).

The protein belongs to the ATP-dependent AMP-binding enzyme family.

The enzyme catalyses a long-chain fatty acid + ATP + CoA = a long-chain fatty acyl-CoA + AMP + diphosphate. It catalyses the reaction dodecanoate + ATP + CoA = dodecanoyl-CoA + AMP + diphosphate. The catalysed reaction is hexadecanoate + ATP + CoA = hexadecanoyl-CoA + AMP + diphosphate. The protein operates within lipid metabolism; fatty acid biosynthesis. Functionally, catalyzes the activation of long-chain fatty acids as acyl-coenzyme A (acyl-CoA), which are then transferred to the multifunctional polyketide synthase (PKS) type III for further chain extension. The chain is Long-chain-fatty-acid--CoA ligase FadD15 (fadD15) from Mycobacterium tuberculosis (strain ATCC 25618 / H37Rv).